A 715-amino-acid polypeptide reads, in one-letter code: Beta-galactosidase 9 (715 aa).

A signal peptide spans 1 to 20 (MSGGAVAFLLLVAAAAVANA). Glutamate 178 serves as the catalytic Proton donor. Glutamate 247 serves as the catalytic Nucleophile.

This sequence belongs to the glycosyl hydrolase 35 family.

It is found in the secreted. Its subcellular location is the extracellular space. The protein resides in the apoplast. It catalyses the reaction Hydrolysis of terminal non-reducing beta-D-galactose residues in beta-D-galactosides.. The protein is Beta-galactosidase 9 of Oryza sativa subsp. japonica (Rice).